A 195-amino-acid polypeptide reads, in one-letter code: Molybdenum cofactor guanylyltransferase (195 aa).

Residues 12–14, K25, N53, D70, and D100 each bind GTP; that span reads LAG. D100 contacts Mg(2+).

The protein belongs to the MobA family. Monomer. The cofactor is Mg(2+).

The protein resides in the cytoplasm. It carries out the reaction Mo-molybdopterin + GTP + H(+) = Mo-molybdopterin guanine dinucleotide + diphosphate. Transfers a GMP moiety from GTP to Mo-molybdopterin (Mo-MPT) cofactor (Moco or molybdenum cofactor) to form Mo-molybdopterin guanine dinucleotide (Mo-MGD) cofactor. This chain is Molybdenum cofactor guanylyltransferase, found in Vibrio campbellii (strain ATCC BAA-1116).